Here is a 398-residue protein sequence, read N- to C-terminus: 1-deoxy-D-xylulose 5-phosphate reductoisomerase (398 aa).

Residues Thr11, Gly12, Ser13, Ile14, Arg38, Asn39, and Asn125 each contribute to the NADPH site. Lys126 is a 1-deoxy-D-xylulose 5-phosphate binding site. Glu127 contributes to the NADPH binding site. Asp151 serves as a coordination point for Mn(2+). 4 residues coordinate 1-deoxy-D-xylulose 5-phosphate: Ser152, Glu153, Ser179, and His202. Glu153 lines the Mn(2+) pocket. NADPH is bound at residue Gly208. Positions 215, 220, 221, and 224 each coordinate 1-deoxy-D-xylulose 5-phosphate. Glu224 is a Mn(2+) binding site.

This sequence belongs to the DXR family. Mg(2+) is required as a cofactor. Requires Mn(2+) as cofactor.

The catalysed reaction is 2-C-methyl-D-erythritol 4-phosphate + NADP(+) = 1-deoxy-D-xylulose 5-phosphate + NADPH + H(+). The protein operates within isoprenoid biosynthesis; isopentenyl diphosphate biosynthesis via DXP pathway; isopentenyl diphosphate from 1-deoxy-D-xylulose 5-phosphate: step 1/6. Catalyzes the NADPH-dependent rearrangement and reduction of 1-deoxy-D-xylulose-5-phosphate (DXP) to 2-C-methyl-D-erythritol 4-phosphate (MEP). The protein is 1-deoxy-D-xylulose 5-phosphate reductoisomerase of Burkholderia cenocepacia (strain HI2424).